Consider the following 546-residue polypeptide: Chaperonin GroEL (546 aa).

Residues 30-33, lysine 51, 87-91, glycine 415, 479-481, and aspartate 495 each bind ATP; these read TLGP, DGTTT, and NAA.

The protein belongs to the chaperonin (HSP60) family. Forms a cylinder of 14 subunits composed of two heptameric rings stacked back-to-back. Interacts with the co-chaperonin GroES.

The protein resides in the cytoplasm. The catalysed reaction is ATP + H2O + a folded polypeptide = ADP + phosphate + an unfolded polypeptide.. In terms of biological role, together with its co-chaperonin GroES, plays an essential role in assisting protein folding. The GroEL-GroES system forms a nano-cage that allows encapsulation of the non-native substrate proteins and provides a physical environment optimized to promote and accelerate protein folding. The sequence is that of Chaperonin GroEL from Pseudomonas entomophila (strain L48).